The sequence spans 139 residues: NADPH-dependent 7-cyano-7-deazaguanine reductase (139 aa).

The active-site Thioimide intermediate is Cys34. Asp41 functions as the Proton donor in the catalytic mechanism. Residues 56-58 and 75-76 each bind substrate; these read IEL and HE.

The protein belongs to the GTP cyclohydrolase I family. QueF type 1 subfamily.

It is found in the cytoplasm. The catalysed reaction is 7-aminomethyl-7-carbaguanine + 2 NADP(+) = 7-cyano-7-deazaguanine + 2 NADPH + 3 H(+). Its pathway is tRNA modification; tRNA-queuosine biosynthesis. Functionally, catalyzes the NADPH-dependent reduction of 7-cyano-7-deazaguanine (preQ0) to 7-aminomethyl-7-deazaguanine (preQ1). The sequence is that of NADPH-dependent 7-cyano-7-deazaguanine reductase from Nitrosomonas eutropha (strain DSM 101675 / C91 / Nm57).